The chain runs to 387 residues: Chaperone protein DnaJ (387 aa).

The J domain maps to 6 to 71 (DYYEILGVPR…EKRRKYDQFG (66 aa)). The CR-type zinc-finger motif lies at 146-228 (GCEKEIPIYR…CGGTGTVRRQ (83 aa)). The Zn(2+) site is built by C159, C162, C176, C179, C202, C205, C216, and C219. CXXCXGXG motif repeat units lie at residues 159 to 166 (CSVCGGSG), 176 to 183 (CQKCGGTG), 202 to 209 (CDACGGVG), and 216 to 223 (CRECGGTG).

Belongs to the DnaJ family. Homodimer. Requires Zn(2+) as cofactor.

The protein localises to the cytoplasm. In terms of biological role, participates actively in the response to hyperosmotic and heat shock by preventing the aggregation of stress-denatured proteins and by disaggregating proteins, also in an autonomous, DnaK-independent fashion. Unfolded proteins bind initially to DnaJ; upon interaction with the DnaJ-bound protein, DnaK hydrolyzes its bound ATP, resulting in the formation of a stable complex. GrpE releases ADP from DnaK; ATP binding to DnaK triggers the release of the substrate protein, thus completing the reaction cycle. Several rounds of ATP-dependent interactions between DnaJ, DnaK and GrpE are required for fully efficient folding. Also involved, together with DnaK and GrpE, in the DNA replication of plasmids through activation of initiation proteins. The polypeptide is Chaperone protein DnaJ (Caldicellulosiruptor saccharolyticus (strain ATCC 43494 / DSM 8903 / Tp8T 6331)).